The chain runs to 102 residues: Small ribosomal subunit protein uS10 (102 aa).

The protein belongs to the universal ribosomal protein uS10 family. In terms of assembly, part of the 30S ribosomal subunit.

Its function is as follows. Involved in the binding of tRNA to the ribosomes. In Streptococcus suis (strain 98HAH33), this protein is Small ribosomal subunit protein uS10.